The primary structure comprises 373 residues: Type 2 DNA topoisomerase 6 subunit A (373 aa).

One can recognise a Topo IIA-type catalytic domain in the interval 15–153 (QGDTLAKERL…FHMRPEEDGA (139 aa)). Tyr-110 (O-(5'-phospho-DNA)-tyrosine intermediate) is an active-site residue. Residues Glu-206 and Asp-258 each coordinate Mg(2+).

Belongs to the TOP6A family. As to quaternary structure, homodimer. Heterotetramer of two Top6A and two Top6B chains. Mg(2+) serves as cofactor.

It carries out the reaction ATP-dependent breakage, passage and rejoining of double-stranded DNA.. In terms of biological role, relaxes both positive and negative superturns and exhibits a strong decatenase activity. The chain is Type 2 DNA topoisomerase 6 subunit A from Methanosarcina acetivorans (strain ATCC 35395 / DSM 2834 / JCM 12185 / C2A).